Reading from the N-terminus, the 142-residue chain is Transcriptional regulator MraZ (142 aa).

2 SpoVT-AbrB domains span residues 5–47 (EYPY…PLAS) and 76–119 (ANKA…NPGR).

This sequence belongs to the MraZ family. Forms oligomers.

Its subcellular location is the cytoplasm. It is found in the nucleoid. The sequence is that of Transcriptional regulator MraZ from Deinococcus deserti (strain DSM 17065 / CIP 109153 / LMG 22923 / VCD115).